A 241-amino-acid chain; its full sequence is MIRVEFLKVFRFLTVLPIGEHPKSPREIGEQAWLGLPAVGLVSGLLAGVVAWAFAGTPVRGCLVVLTLLVLEGAQHFDGLVDVGDALMAGVISEEGATKAMRDPRVGVGGLAIGSMALLLAVASFGWIPFEVLVPIEVFSRFTVLPMAAVGEPAPASYSGRVFTEYVDADQVLLGGILSTVVSLPFSPVATLTCAVCSAVVAWTCLEAARRTIRGVNGDFLGASIWVSRVLSAVCLSSLPW.

The next 4 membrane-spanning stretches (helical) occupy residues 34–54, 108–128, 184–206, and 220–240; these read LGLP…AWAF, VGGL…FGWI, LPFS…WTCL, and FLGA…SSLP.

It belongs to the CobS family. Mg(2+) serves as cofactor.

It localises to the cell membrane. It catalyses the reaction alpha-ribazole + adenosylcob(III)inamide-GDP = adenosylcob(III)alamin + GMP + H(+). The catalysed reaction is alpha-ribazole 5'-phosphate + adenosylcob(III)inamide-GDP = adenosylcob(III)alamin 5'-phosphate + GMP + H(+). Its pathway is cofactor biosynthesis; adenosylcobalamin biosynthesis; adenosylcobalamin from cob(II)yrinate a,c-diamide: step 7/7. Joins adenosylcobinamide-GDP and alpha-ribazole to generate adenosylcobalamin (Ado-cobalamin). Also synthesizes adenosylcobalamin 5'-phosphate from adenosylcobinamide-GDP and alpha-ribazole 5'-phosphate. The sequence is that of Adenosylcobinamide-GDP ribazoletransferase from Methanopyrus kandleri (strain AV19 / DSM 6324 / JCM 9639 / NBRC 100938).